A 65-amino-acid chain; its full sequence is Large ribosomal subunit protein uL29 (65 aa).

The protein belongs to the universal ribosomal protein uL29 family.

This chain is Large ribosomal subunit protein uL29, found in Syntrophus aciditrophicus (strain SB).